A 682-amino-acid chain; its full sequence is Protein SPT2 homolog (682 aa).

Positions 1–569 (MDFREILLIA…PLLSGYRSAQ (569 aa)) are important for interaction with DNA. Lysine 37 is covalently cross-linked (Glycyl lysine isopeptide (Lys-Gly) (interchain with G-Cter in SUMO2)). Residues 46–82 (AFLRRKEEELRQKALEEKKRKEELVKKRIELKHDKKA) are a coiled coil. Residues 80-170 (KKARAMAKRT…SAPSPMNFTD (91 aa)) form a disordered region. The span at 101–111 (VEEKTKKKQLV) shows a compositional bias: basic and acidic residues. A compositionally biased stretch (acidic residues) spans 121-131 (QEYDVEEEDFI). The span at 156-165 (KAPLKSAPSP) shows a compositional bias: low complexity. A Glycyl lysine isopeptide (Lys-Gly) (interchain with G-Cter in SUMO2) cross-link involves residue lysine 186. Residues 187-208 (VVKKAEDRPLTAEELREREFLE) show a composition bias toward basic and acidic residues. 2 disordered regions span residues 187-533 (VVKK…TKPR) and 549-595 (RSSN…DEYD). Polar residues-rich tracts occupy residues 267–280 (STAS…SSPK), 317–334 (STCS…TQKS), 371–393 (PGSN…TLSS), 400–409 (QNGSSSSGPE), and 419–432 (ASNS…LNGT). Residue serine 277 is modified to Phosphoserine. 2 stretches are compositionally biased toward low complexity: residues 435 to 460 (PGRP…RPVG) and 490 to 504 (SGPG…PAGR). The segment at 570 to 682 (GPQRLPFPTG…RRKAKKLKRH (113 aa)) is important for interaction with histones. An N6-acetyllysine modification is found at lysine 581. A compositionally biased stretch (acidic residues) spans 586–595 (YEEDDDDEYD). Position 596 is a phosphoserine (serine 596). Composition is skewed to basic and acidic residues over residues 641-652 (SWKEQQKEEAKS) and 663-672 (EMRREEEELK). A disordered region spans residues 641-682 (SWKEQQKEEAKSLRLGMQEDLEEMRREEEELKRRKAKKLKRH). Residues 642–682 (WKEQQKEEAKSLRLGMQEDLEEMRREEEELKRRKAKKLKRH) adopt a coiled-coil conformation. Basic residues predominate over residues 673-682 (RRKAKKLKRH).

The protein belongs to the SPT2 family. As to quaternary structure, interacts with histones. Interacts with a heterotetrameric complex formed by histone H3 and H4, especially when the histone tetramer is not bound to DNA. Interacts with histone H3.3.

The protein resides in the nucleus. It localises to the nucleolus. Its function is as follows. Histone chaperone that stabilizes pre-existing histone tetramers and regulates replication-independent histone exchange on chromatin. Required for normal chromatin refolding in the coding region of transcribed genes, and for the suppression of spurious transcription. Binds DNA and histones and promotes nucleosome assembly (in vitro). Facilitates formation of tetrameric histone complexes containing histone H3 and H4. Modulates RNA polymerase 1-mediated transcription. Binds DNA, with a preference for branched DNA species, such as Y-form DNA and Holliday junction DNA. The protein is Protein SPT2 homolog (Spty2d1) of Mus musculus (Mouse).